The following is a 159-amino-acid chain: Probable minor fimbrial protein (159 aa).

Positions 1 to 6 (MKKMHG) are cleaved as a propeptide — leader sequence. Phenylalanine 7 carries the post-translational modification N-methylphenylalanine. The helical transmembrane segment at 7–27 (FTLIELMIVVAIIGVLASTAL) threads the bilayer. 2 disulfide bridges follow: cysteine 56–cysteine 71 and cysteine 140–cysteine 153.

Belongs to the N-Me-Phe pilin family. The pili are polar flexible filaments of about 5.4 nanometers diameter and 2.5 micrometers average length; they consist of only a single polypeptide chain arranged in a helical configuration of five subunits per turn in the assembled pilus.

Its subcellular location is the fimbrium. It is found in the membrane. This chain is Probable minor fimbrial protein (fimZ), found in Dichelobacter nodosus (Bacteroides nodosus).